The sequence spans 250 residues: Bacteriorhodopsin-I (250 aa).

Transmembrane regions (helical) follow at residues 7–27 (EGIW…YFIA), 42–62 (IATI…ALGF), 81–101 (YTDW…LAGA), 114–134 (VLMI…VLSA), 139–159 (LVWW…LFSS), 185–205 (VWLV…LVGI), and 207–227 (IETA…GIIL). N6-(retinylidene)lysine is present on Lys-220.

The protein belongs to the archaeal/bacterial/fungal opsin family. The covalent binding of retinal to the apoprotein, bacterioopsin, generates bacteriorhodopsin.

It localises to the membrane. Light-driven proton pump. The polypeptide is Bacteriorhodopsin-I (bop) (Haloarcula marismortui (strain ATCC 43049 / DSM 3752 / JCM 8966 / VKM B-1809) (Halobacterium marismortui)).